Here is a 95-residue protein sequence, read N- to C-terminus: Glutamine synthetase and cystathionine beta-lyase binding protein (95 aa).

In terms of assembly, interacts with glutamine synthetase (TTHA1329) and cystathionine beta-lyase (TTHA1620), but proteins do not form a ternary complex.

In terms of biological role, binds to glutamine synthetase and cystathionine beta-lyase. May be utilized for the efficient use of nitrogen in the global nitrogen regulation of T.thermophilus. This chain is Glutamine synthetase and cystathionine beta-lyase binding protein, found in Thermus thermophilus (strain ATCC 27634 / DSM 579 / HB8).